A 518-amino-acid chain; its full sequence is NADH-quinone oxidoreductase subunit N (518 aa).

Helical transmembrane passes span 18 to 38, 45 to 65, 82 to 102, 113 to 133, 136 to 156, 171 to 191, 220 to 240, 254 to 274, 295 to 315, 328 to 348, 355 to 375, 399 to 419, 439 to 459, and 486 to 506; these read FRPEMALTFGTLVLFVLDLVF, VALLTAGALAVLAAAAGLLAI, AFAIFFKWLFLAAGALTVIIA, IGQFFALLMAIVLGMFMMASA, LLMVYLSLELVSMVSYVLAGF, VIYGGVASGVMLFGMSYLYGL, VALVVAIVFVTAGIGYKVAAV, PTPFTAFLSVGPKAAGFALAI, LAGIPWPAVVGVIAAVTMTLG, LLAYSSIAHAGYTLMGLSAVS, VMIYMLVYLVMNVGAFLVVIL, AVAFAIFLFSLTGLPPFAGFV, WYAWLALIGALNTAIALYYYV, and VMLGAFSVAILVFGIWWTPMV.

The protein belongs to the complex I subunit 2 family. As to quaternary structure, NDH-1 is composed of 14 different subunits. Subunits NuoA, H, J, K, L, M, N constitute the membrane sector of the complex.

The protein resides in the cell inner membrane. It carries out the reaction a quinone + NADH + 5 H(+)(in) = a quinol + NAD(+) + 4 H(+)(out). Its function is as follows. NDH-1 shuttles electrons from NADH, via FMN and iron-sulfur (Fe-S) centers, to quinones in the respiratory chain. The immediate electron acceptor for the enzyme in this species is believed to be ubiquinone. Couples the redox reaction to proton translocation (for every two electrons transferred, four hydrogen ions are translocated across the cytoplasmic membrane), and thus conserves the redox energy in a proton gradient. In Anaeromyxobacter sp. (strain Fw109-5), this protein is NADH-quinone oxidoreductase subunit N.